The chain runs to 292 residues: 4-hydroxy-tetrahydrodipicolinate synthase (292 aa).

Residue Thr-44 coordinates pyruvate. The Proton donor/acceptor role is filled by Tyr-132. Lys-161 (schiff-base intermediate with substrate) is an active-site residue. Ile-203 contributes to the pyruvate binding site.

The protein belongs to the DapA family. In terms of assembly, homotetramer.

Its subcellular location is the cytoplasm. It catalyses the reaction L-aspartate 4-semialdehyde + pyruvate = (2S,4S)-4-hydroxy-2,3,4,5-tetrahydrodipicolinate + H2O + H(+). Its pathway is amino-acid biosynthesis; L-lysine biosynthesis via DAP pathway; (S)-tetrahydrodipicolinate from L-aspartate: step 3/4. Is feedback inhibited by lysine. Is competitively inhibited by 2-oxobutyrate with respect to pyruvate. Its function is as follows. Catalyzes the condensation of (S)-aspartate-beta-semialdehyde [(S)-ASA] and pyruvate to 4-hydroxy-tetrahydrodipicolinate (HTPA). The protein is 4-hydroxy-tetrahydrodipicolinate synthase of Rhizobium meliloti (Ensifer meliloti).